The following is a 417-amino-acid chain: NADH-dependent phenylglyoxylate dehydrogenase subunit alpha (417 aa).

As to quaternary structure, dimer of heteropentamers composed of an alpha (PadG), a beta (PadI), a gamma (PadE), a delta (PadF) and an epsilon (PadH) subunit.

The catalysed reaction is phenylglyoxylate + NAD(+) + CoA = benzoyl-CoA + CO2 + NADH. With respect to regulation, activated by magnesium ions and thiamine diphosphate. Involved in the anaerobic metabolism of phenylalanine and phenylacetate. Catalyzes the oxidative decarboxylation of phenylglyoxylate to benzoyl-CoA and CO(2). It can also react slowly with 2-oxo-3-methylbutanoate and use different electron acceptors such as benzyl viologen, methyl viologen, FAD or FMN, but NAD seems to be the physiological electron acceptor. Also catalyzes an isotope exchange between CO(2) and the carboxyl group which proves partial or complete reversibility of the oxidative decarboxylation reaction. The sequence is that of NADH-dependent phenylglyoxylate dehydrogenase subunit alpha (padG) from Aromatoleum evansii (Azoarcus evansii).